Here is a 266-residue protein sequence, read N- to C-terminus: Glucosamine-6-phosphate deaminase (266 aa).

Aspartate 72 acts as the Proton acceptor; for enolization step in catalysis. The For ring-opening step role is filled by aspartate 141. The Proton acceptor; for ring-opening step role is filled by histidine 143. Glutamate 148 functions as the For ring-opening step in the catalytic mechanism.

This sequence belongs to the glucosamine/galactosamine-6-phosphate isomerase family. NagB subfamily. As to quaternary structure, homohexamer.

The enzyme catalyses alpha-D-glucosamine 6-phosphate + H2O = beta-D-fructose 6-phosphate + NH4(+). The protein operates within amino-sugar metabolism; N-acetylneuraminate degradation; D-fructose 6-phosphate from N-acetylneuraminate: step 5/5. With respect to regulation, allosterically activated by N-acetylglucosamine 6-phosphate (GlcNAc6P). Catalyzes the reversible isomerization-deamination of glucosamine 6-phosphate (GlcN6P) to form fructose 6-phosphate (Fru6P) and ammonium ion. This Vibrio vulnificus (strain CMCP6) protein is Glucosamine-6-phosphate deaminase.